A 214-amino-acid polypeptide reads, in one-letter code: tRNA (guanine-N(7)-)-methyltransferase (214 aa).

S-adenosyl-L-methionine contacts are provided by glutamate 44, glutamate 69, aspartate 96, and aspartate 118. The active site involves aspartate 118. Substrate contacts are provided by residues lysine 122, aspartate 154, and 191–194 (TEYE).

The protein belongs to the class I-like SAM-binding methyltransferase superfamily. TrmB family.

The enzyme catalyses guanosine(46) in tRNA + S-adenosyl-L-methionine = N(7)-methylguanosine(46) in tRNA + S-adenosyl-L-homocysteine. The protein operates within tRNA modification; N(7)-methylguanine-tRNA biosynthesis. Catalyzes the formation of N(7)-methylguanine at position 46 (m7G46) in tRNA. The polypeptide is tRNA (guanine-N(7)-)-methyltransferase (Listeria monocytogenes serovar 1/2a (strain ATCC BAA-679 / EGD-e)).